A 505-amino-acid polypeptide reads, in one-letter code: ATP synthase subunit alpha, cyanelle (505 aa).

Position 170–177 (170–177 (GDRQTGKT)) interacts with ATP.

It belongs to the ATPase alpha/beta chains family. In terms of assembly, F-type ATPases have 2 components, CF(1) - the catalytic core - and CF(0) - the membrane proton channel. CF(1) has five subunits: alpha(3), beta(3), gamma(1), delta(1), epsilon(1). CF(0) has four main subunits: a, b, b' and c.

The protein localises to the plastid. It is found in the cyanelle thylakoid membrane. It carries out the reaction ATP + H2O + 4 H(+)(in) = ADP + phosphate + 5 H(+)(out). Produces ATP from ADP in the presence of a proton gradient across the membrane. The alpha chain is a regulatory subunit. The polypeptide is ATP synthase subunit alpha, cyanelle (Cyanophora paradoxa).